Consider the following 696-residue polypeptide: UvrABC system protein B (696 aa).

One can recognise a Helicase ATP-binding domain in the interval 46–433; that stretch reads EGVEDGLSFQ…SGQTAEQVVR (388 aa). 59–66 is an ATP binding site; that stretch reads GVTGSGKT. A Beta-hairpin motif is present at residues 112-135; it reads YYDYYQPEAYVPQRDLFIEKDSSI. The region spanning 450–616 is the Helicase C-terminal domain; the sequence is QVDDVLSEIT…GVVKRIKDII (167 aa). Positions 647-682 constitute a UVR domain; sequence AKEIKRLEKQMADYAKNLEFEKAAQTRDQLALLRER.

It belongs to the UvrB family. In terms of assembly, forms a heterotetramer with UvrA during the search for lesions. Interacts with UvrC in an incision complex.

It localises to the cytoplasm. Its function is as follows. The UvrABC repair system catalyzes the recognition and processing of DNA lesions. A damage recognition complex composed of 2 UvrA and 2 UvrB subunits scans DNA for abnormalities. Upon binding of the UvrA(2)B(2) complex to a putative damaged site, the DNA wraps around one UvrB monomer. DNA wrap is dependent on ATP binding by UvrB and probably causes local melting of the DNA helix, facilitating insertion of UvrB beta-hairpin between the DNA strands. Then UvrB probes one DNA strand for the presence of a lesion. If a lesion is found the UvrA subunits dissociate and the UvrB-DNA preincision complex is formed. This complex is subsequently bound by UvrC and the second UvrB is released. If no lesion is found, the DNA wraps around the other UvrB subunit that will check the other stand for damage. In Burkholderia mallei (strain ATCC 23344), this protein is UvrABC system protein B.